Consider the following 102-residue polypeptide: Class II hydrophobin 3 (102 aa).

A signal peptide spans 1–16 (MQFLAVAALLFTTALA). 4 disulfide bridges follow: Cys33/Cys83, Cys44/Cys74, Cys45/Cys57, and Cys84/Cys95.

The protein belongs to the cerato-ulmin hydrophobin family. In terms of assembly, homotetramer. Further self-assembles to form highly ordered films at water-air interfaces through intermolecular interactions. As to expression, expressed in the conidia, vegetative growth and induction growth stages.

The protein resides in the secreted. It localises to the cell wall. Its subcellular location is the cytoplasm. Aerial growth, conidiation, and dispersal of filamentous fungi in the environment rely upon a capability of their secreting small amphipathic proteins called hydrophobins (HPBs) with low sequence identity. Class I can self-assemble into an outermost layer of rodlet bundles on aerial cell surfaces, conferring cellular hydrophobicity that supports fungal growth, development and dispersal; whereas Class II form highly ordered films at water-air interfaces through intermolecular interactions but contribute nothing to the rodlet structure. Hbf3 is a class II hydrophobin that has a role in vegetative growth and asexual development. In Hypocrea jecorina (strain QM6a) (Trichoderma reesei), this protein is Class II hydrophobin 3.